The sequence spans 513 residues: Na(+)/H(+) antiporter NhaB (513 aa).

The next 11 membrane-spanning stretches (helical) occupy residues L23–A43, I52–I72, L97–F117, F144–I164, L202–P222, F238–L258, A303–I323, T348–I368, L391–I411, A447–I467, and V475–F495.

The protein belongs to the NhaB Na(+)/H(+) (TC 2.A.34) antiporter family.

The protein localises to the cell inner membrane. The enzyme catalyses 2 Na(+)(in) + 3 H(+)(out) = 2 Na(+)(out) + 3 H(+)(in). Functionally, na(+)/H(+) antiporter that extrudes sodium in exchange for external protons. The protein is Na(+)/H(+) antiporter NhaB of Escherichia coli (strain SMS-3-5 / SECEC).